The following is a 133-amino-acid chain: ATP synthase epsilon chain (133 aa).

It belongs to the ATPase epsilon chain family. In terms of assembly, F-type ATPases have 2 components, CF(1) - the catalytic core - and CF(0) - the membrane proton channel. CF(1) has five subunits: alpha(3), beta(3), gamma(1), delta(1), epsilon(1). CF(0) has three main subunits: a, b and c.

It is found in the cell membrane. Its function is as follows. Produces ATP from ADP in the presence of a proton gradient across the membrane. This is ATP synthase epsilon chain from Halalkalibacterium halodurans (strain ATCC BAA-125 / DSM 18197 / FERM 7344 / JCM 9153 / C-125) (Bacillus halodurans).